A 132-amino-acid polypeptide reads, in one-letter code: Small ribosomal subunit protein uS8 (132 aa).

The protein belongs to the universal ribosomal protein uS8 family. In terms of assembly, part of the 30S ribosomal subunit. Contacts proteins S5 and S12.

Functionally, one of the primary rRNA binding proteins, it binds directly to 16S rRNA central domain where it helps coordinate assembly of the platform of the 30S subunit. The protein is Small ribosomal subunit protein uS8 of Granulibacter bethesdensis (strain ATCC BAA-1260 / CGDNIH1).